Consider the following 122-residue polypeptide: Flagellar protein FliT (122 aa).

Positions 1–50 are required for homodimerization; sequence MTSTVEFINRWQRIALLSQSLLELAQRGEWDLLLQQEVSYLQSIETVMEK. The interval 60 to 98 is fliD binding; that stretch reads IQDMVAGYIKQTLDNEQLLKGLLQQRLDELSSLIGQSTR.

Belongs to the FliT family. In terms of assembly, homodimer. Interacts with FliD and FlhC.

The protein localises to the cytoplasm. It localises to the cytosol. Functionally, dual-function protein that regulates the transcription of class 2 flagellar operons and that also acts as an export chaperone for the filament-capping protein FliD. As a transcriptional regulator, acts as an anti-FlhDC factor; it directly binds FlhC, thus inhibiting the binding of the FlhC/FlhD complex to class 2 promoters, resulting in decreased expression of class 2 flagellar operons. As a chaperone, effects FliD transition to the membrane by preventing its premature polymerization, and by directing it to the export apparatus. The polypeptide is Flagellar protein FliT (Salmonella schwarzengrund (strain CVM19633)).